The sequence spans 40 residues: Large ribosomal subunit protein bL36A (40 aa).

This sequence belongs to the bacterial ribosomal protein bL36 family.

This chain is Large ribosomal subunit protein bL36A, found in Kineococcus radiotolerans (strain ATCC BAA-149 / DSM 14245 / SRS30216).